Consider the following 1107-residue polypeptide: DNA polymerase delta catalytic subunit (1107 aa).

The tract at residues 1–34 is disordered; the sequence is MDGKRRPGPGPGVPPKRARGGLWDDDDAPRPSQF. Positions 4 to 19 match the Nuclear localization signal motif; it reads KRRPGPGPGVPPKRAR. Omega-N-methylarginine is present on Arg-19. Residue Lys-574 forms a Glycyl lysine isopeptide (Lys-Gly) (interchain with G-Cter in SUMO2) linkage. Residues Cys-1012, Cys-1015, Cys-1026, and Cys-1029 each contribute to the Zn(2+) site. A CysA-type zinc finger spans residues 1012 to 1029; the sequence is CIGCRTVLSHQGAVCEFC. [4Fe-4S] cluster contacts are provided by Cys-1058, Cys-1061, Cys-1071, and Cys-1076. A CysB motif motif is present at residues 1058–1076; the sequence is CQRCQGSLHEDVICTSRDC.

It belongs to the DNA polymerase type-B family. In terms of assembly, component of the tetrameric DNA polymerase delta complex (Pol-delta4), which consists of POLD1/p125, POLD2/p50, POLD3/p66/p68 and POLD4/p12, with POLD1 bearing both DNA polymerase and 3' to 5' proofreading exonuclease activities. Within Pol-delta4, directly interacts with POLD2 and POLD4. Following genotoxic stress by DNA-damaging agents, such as ultraviolet light and methyl methanesulfonate, or by replication stress induced by treatment with hydroxyurea or aphidicolin, Pol-delta4 is converted into a trimeric form of the complex (Pol-delta3) by POLD4 degradation. Pol-delta3 is the major form at S phase replication sites and DNA damage sites. POLD1 displays different catalytic properties depending upon the complex it is found in. It exhibits higher proofreading activity and fidelity than Pol-delta4, making it particularly well suited to respond to DNA damage. Directly interacts with PCNA, as do POLD3 and POLD4; this interaction stimulates Pol-delta4 polymerase activity. As POLD2 and POLD4, directly interacts with WRNIP1; this interaction stimulates DNA polymerase delta-mediated DNA synthesis, independently of the presence of PCNA. This stimulation may be due predominantly to an increase of initiation frequency and also to increased processivity. Also observed as a dimeric complex with POLD2 (Pol-delta2 complex). Pol-delta2 is relatively insensitive to the PCNA stimulation (2-5-fold) compared to Pol-delta4 that is stimulated by over 50-fold. The DNA polymerase delta complex interacts with POLDIP2; this interaction is probably mediated through direct binding to POLD2. Interacts with CIAO1. Interacts with POLDIP2. Interacts with RFC1. Requires [4Fe-4S] cluster as cofactor. In terms of tissue distribution, widely expressed, with high levels of expression in heart and lung.

The protein localises to the nucleus. It catalyses the reaction DNA(n) + a 2'-deoxyribonucleoside 5'-triphosphate = DNA(n+1) + diphosphate. Its activity is regulated as follows. Regulated by alteration of quaternary structure. Exhibits burst rates of DNA synthesis are about 5 times faster in the presence of POLD4 (Pol-delta4 complex) than in its absence (Pol-delta3 complex), while the affinity of the enzyme for its DNA and dNTP substrates appears unchanged. The Pol-delta3 complex is more likely to proofread DNA synthesis because it cleaves single-stranded DNA twice as fast and transfers mismatched DNA from the polymerase to the exonuclease sites 9 times faster compared to the Pol-delta3 complex. Pol-delta3 also extends mismatched primers 3 times more slowly in the absence of POLD4. The conversion of Pol-delta4 into Pol-delta3 is induced by genotoxic stress or by replication stress leading POLD4 degradation. Stimulated in the presence of PCNA. This stimulation is further increased in the presence of KCTD13/PDIP1, most probably via direct interaction between KCTD13 and POLD2. As the catalytic component of the trimeric (Pol-delta3 complex) and tetrameric DNA polymerase delta complexes (Pol-delta4 complex), plays a crucial role in high fidelity genome replication, including in lagging strand synthesis, and repair. Exhibits both DNA polymerase and 3'- to 5'-exonuclease activities. Requires the presence of accessory proteins POLD2, POLD3 and POLD4 for full activity. Depending upon the absence (Pol-delta3) or the presence of POLD4 (Pol-delta4), displays differences in catalytic activity. Most notably, expresses higher proofreading activity in the context of Pol-delta3 compared with that of Pol-delta4. Although both Pol-delta3 and Pol-delta4 process Okazaki fragments in vitro, Pol-delta3 may be better suited to fulfill this task, exhibiting near-absence of strand displacement activity compared to Pol-delta4 and stalling on encounter with the 5'-blocking oligonucleotides. Pol-delta3 idling process may avoid the formation of a gap, while maintaining a nick that can be readily ligated. Along with DNA polymerase kappa, DNA polymerase delta carries out approximately half of nucleotide excision repair (NER) synthesis following UV irradiation. Under conditions of DNA replication stress, in the presence of POLD3 and POLD4, may catalyze the repair of broken replication forks through break-induced replication (BIR). Involved in the translesion synthesis (TLS) of templates carrying O6-methylguanine, 8oxoG or abasic sites. In Homo sapiens (Human), this protein is DNA polymerase delta catalytic subunit.